Consider the following 485-residue polypeptide: Serine/threonine-protein kinase 4 (485 aa).

Residues 30-281 enclose the Protein kinase domain; the sequence is FDVLEKLGEG…ATELLQHPFI (252 aa). ATP-binding positions include 36-44 and Lys59; that span reads LGEGSYGSV. Asp149 acts as the Proton acceptor in catalysis. At Thr183 the chain carries Phosphothreonine; by autocatalysis. The region spanning 431–478 is the SARAH domain; sequence YSFLKDWSVAEVQLKLNSLDPMMEREIEEIHHKYQAKRQPILEAIESK.

It belongs to the protein kinase superfamily. STE Ser/Thr protein kinase family. STE20 subfamily. As to quaternary structure, homodimer; mediated via the coiled-coil region. Mg(2+) serves as cofactor. Post-translationally, autophosphorylated on Thr-183. In terms of processing, proteolytically cleaved by caspase-3 during apoptosis at Asp-326 resulting in a 37 kDa form. Proteolytic cleavage results in kinase activation and nuclear translocation of the truncated form (MST1/N).

It localises to the cytoplasm. Its subcellular location is the nucleus. It carries out the reaction L-seryl-[protein] + ATP = O-phospho-L-seryl-[protein] + ADP + H(+). The catalysed reaction is L-threonyl-[protein] + ATP = O-phospho-L-threonyl-[protein] + ADP + H(+). The C-terminal non-catalytic region inhibits the kinase activity, the enzyme is activated by caspase-cleavage. Homodimerization and autophosphorylation of Thr-183 is also required for full activation. Functionally, stress-activated, pro-apoptotic kinase which, following caspase-cleavage, enters the nucleus and induces chromatin condensation followed by internucleosomal DNA fragmentation. Key component of the Hippo signaling pathway which plays a pivotal role in organ size control and tumor suppression by restricting proliferation and promoting apoptosis. The core of this pathway is composed of a kinase cascade wherein stk3/mst2 and stk4/mst1, in complex with its regulatory protein sav1, phosphorylates and activates lats1/2 in complex with its regulatory protein mob1, which in turn phosphorylates and inactivates yap1 oncoprotein and wwtr1/taz. Phosphorylation of yap1 by lats2 inhibits its translocation into the nucleus to regulate cellular genes important for cell proliferation, cell death, and cell migration. Phosphorylates 'Ser-14' of histone H2B (H2BS14ph) during apoptosis. In Xenopus laevis (African clawed frog), this protein is Serine/threonine-protein kinase 4 (stk4).